Consider the following 330-residue polypeptide: MSYFDNYFNEIVNSVNDIIKSYISGDVPKLYEASYHLFTSGGKRLRPLILTISSDLFGGQRERAYYAGAAIEVLHTFTLVHDDIMDQDNIRRGLPTVHVKYGLPLAILAGDLLHAKAFQLLTQALRGLPSETIIKAFDIFTRSIIIISEGQAVDMEFEDRIDIKEQEYLDMISRKTAALFSASSSIGALIAGANDNDVRLMSDFGTNLGIAFQIVDDILGLTADEKELGKPVFSDIREGKKTILVIKTLELCKEDEKKIVLKALGNKSASKEELMSSADIIKKYSLDYAYNLAEKYYKNAIDSLNQVSSKSDIPGKALKYLAEFTIRRRK.

Isopentenyl diphosphate is bound by residues lysine 43, arginine 46, and histidine 75. Positions 82 and 86 each coordinate Mg(2+). Residue arginine 91 participates in an all-trans-polyprenyl diphosphate binding. Arginine 92 provides a ligand contact to isopentenyl diphosphate. Residues lysine 175, threonine 176, glutamine 213, lysine 230, and lysine 240 each coordinate an all-trans-polyprenyl diphosphate.

This sequence belongs to the FPP/GGPP synthase family. The cofactor is Mg(2+).

It catalyses the reaction isopentenyl diphosphate + (2E,6E)-farnesyl diphosphate = (2E,6E,10E)-geranylgeranyl diphosphate + diphosphate. It participates in isoprenoid biosynthesis; geranylgeranyl diphosphate biosynthesis; geranylgeranyl diphosphate from farnesyl diphosphate and isopentenyl diphosphate: step 1/1. In terms of biological role, catalyzes the condensation of isopentenyl pyrophosphate with the allylic pyrophosphates to yield geranylgeranyl diphosphate (GGPP) which is a precursor of the ether-linked lipids. It is able to use dimethylallyl diphosphate (DMAPP), geranyl diphosphate (GPP), and (all-E)-geranyl diphosphate (E-FPP) as an allylic substrate. This chain is Geranylgeranyl diphosphate synthase (gds), found in Sulfolobus acidocaldarius (strain ATCC 33909 / DSM 639 / JCM 8929 / NBRC 15157 / NCIMB 11770).